Reading from the N-terminus, the 237-residue chain is 5'-methylthioadenosine/S-adenosylhomocysteine nucleosidase (237 aa).

Glu12 acts as the Proton acceptor in catalysis. Residues Ala78, Ile152, and Met173–Glu174 each bind substrate. Asp197 acts as the Proton donor in catalysis.

It belongs to the PNP/UDP phosphorylase family. MtnN subfamily. Homodimer.

The enzyme catalyses S-adenosyl-L-homocysteine + H2O = S-(5-deoxy-D-ribos-5-yl)-L-homocysteine + adenine. It catalyses the reaction S-methyl-5'-thioadenosine + H2O = 5-(methylsulfanyl)-D-ribose + adenine. It carries out the reaction 5'-deoxyadenosine + H2O = 5-deoxy-D-ribose + adenine. It participates in amino-acid biosynthesis; L-methionine biosynthesis via salvage pathway; S-methyl-5-thio-alpha-D-ribose 1-phosphate from S-methyl-5'-thioadenosine (hydrolase route): step 1/2. Its function is as follows. Catalyzes the irreversible cleavage of the glycosidic bond in both 5'-methylthioadenosine (MTA) and S-adenosylhomocysteine (SAH/AdoHcy) to adenine and the corresponding thioribose, 5'-methylthioribose and S-ribosylhomocysteine, respectively. Also cleaves 5'-deoxyadenosine, a toxic by-product of radical S-adenosylmethionine (SAM) enzymes, into 5-deoxyribose and adenine. Thus, is required for in vivo function of the radical SAM enzymes biotin synthase and lipoic acid synthase, that are inhibited by 5'-deoxyadenosine accumulation. This Hamiltonella defensa subsp. Acyrthosiphon pisum (strain 5AT) protein is 5'-methylthioadenosine/S-adenosylhomocysteine nucleosidase.